A 375-amino-acid polypeptide reads, in one-letter code: uncharacterized protein (375 aa).

The 225-residue stretch at 78-302 (KKIEITSTIH…IFPNIRITSP (225 aa)) folds into the Radical SAM core domain. [4Fe-4S] cluster is bound by residues C92, C98, and C101.

The cofactor is [4Fe-4S] cluster.

This is an uncharacterized protein from Methanocaldococcus jannaschii (strain ATCC 43067 / DSM 2661 / JAL-1 / JCM 10045 / NBRC 100440) (Methanococcus jannaschii).